A 309-amino-acid polypeptide reads, in one-letter code: Foldase protein PrsA 2 (309 aa).

Residues 1 to 20 (MKYRLIGVGASLVVAVMLTG) form the signal peptide. The N-palmitoyl cysteine moiety is linked to residue C21. A lipid anchor (S-diacylglycerol cysteine) is attached at C21. Residues 137 to 232 (MPMTTVQHIA…TADTKDKPTY (96 aa)) enclose the PpiC domain.

It belongs to the PrsA family.

It is found in the cell membrane. The catalysed reaction is [protein]-peptidylproline (omega=180) = [protein]-peptidylproline (omega=0). Functionally, plays a major role in protein secretion by helping the post-translocational extracellular folding of several secreted proteins. This chain is Foldase protein PrsA 2 (prsA2), found in Lactiplantibacillus plantarum (strain ATCC BAA-793 / NCIMB 8826 / WCFS1) (Lactobacillus plantarum).